Reading from the N-terminus, the 369-residue chain is Methylthioribose-1-phosphate isomerase (369 aa).

Residues R54 to A56, R95, and Q208 contribute to the substrate site. The Proton donor role is filled by D249. N259 to K260 contributes to the substrate binding site.

This sequence belongs to the eIF-2B alpha/beta/delta subunits family. MtnA subfamily.

It catalyses the reaction 5-(methylsulfanyl)-alpha-D-ribose 1-phosphate = 5-(methylsulfanyl)-D-ribulose 1-phosphate. It participates in amino-acid biosynthesis; L-methionine biosynthesis via salvage pathway; L-methionine from S-methyl-5-thio-alpha-D-ribose 1-phosphate: step 1/6. In terms of biological role, catalyzes the interconversion of methylthioribose-1-phosphate (MTR-1-P) into methylthioribulose-1-phosphate (MTRu-1-P). The sequence is that of Methylthioribose-1-phosphate isomerase from Desulfosudis oleivorans (strain DSM 6200 / JCM 39069 / Hxd3) (Desulfococcus oleovorans).